A 226-amino-acid polypeptide reads, in one-letter code: MYSISFQEDSLLPRERLAKEGVEALSNQELLAILLRTGTRQASVFEIAQKVLNNLSSLTDLKKMTLQELQSLSGIGRVKAIELQAMIELGHRIHKHETLEMESILSSQKLAKKMQQELGDKKQEHLVALYLNTQNQIIHQQTIFIGSVTRSIAEPREILHYAIKHMATSLVLVHNHPSGAVAPSQNDDHVTKLVKEACELMGIVLLDHLIVSHSNYFSYREKTDLI.

The 123-residue stretch at 103–225 folds into the MPN domain; that stretch reads SILSSQKLAK…YFSYREKTDL (123 aa). The Zn(2+) site is built by H174, H176, and D187. The short motif at 174–187 is the JAMM motif element; that stretch reads HNHPSGAVAPSQND.

Belongs to the UPF0758 family.

The sequence is that of UPF0758 protein SPD_0975 from Streptococcus pneumoniae serotype 2 (strain D39 / NCTC 7466).